An 86-amino-acid polypeptide reads, in one-letter code: Putative antitoxin VapB5 (86 aa).

Belongs to the phD/YefM antitoxin family. In terms of assembly, forms a complex with VapC5.

Functionally, probable antitoxin component of a probable type II toxin-antitoxin (TA) system. The cognate toxin is VapC5. This chain is Putative antitoxin VapB5 (vapB5), found in Mycobacterium tuberculosis (strain CDC 1551 / Oshkosh).